The following is a 1104-amino-acid chain: Ankyrin repeat- and BTB/POZ domain-containing protein 3 (1104 aa).

The helical transmembrane segment at 168–188 threads the bilayer; sequence IVLSWGLAAHCTAAALAALSL. A disordered region spans residues 260 to 301; it reads SCSGPGSGSGSGPGPSSGPGAAPAADKEREAPGGGAASGGAC. Residues 264 to 276 show a composition bias toward gly residues; that stretch reads PGSGSGSGPGPSS. 5 ANK repeats span residues 603–632, 649–678, 687–716, 730–759, and 825–854; these read QGMT…DLNV, RHWT…KVEG, YSET…DPLI, GDMN…KEKS, and TWLE…TIQE. One can recognise a BTB domain in the interval 923–989; sequence SDVTFLVEGR…LYYGGPESLL (67 aa).

It is found in the membrane. In Homo sapiens (Human), this protein is Ankyrin repeat- and BTB/POZ domain-containing protein 3.